Consider the following 333-residue polypeptide: Glyoxylate reductase (333 aa).

NADP(+) is bound by residues 158-161 (FGRI), 180-182 (SRS), and 239-241 (IAR). Residues arginine 241 and glutamate 270 contribute to the active site. Histidine 288 serves as the catalytic Proton donor. An NADP(+)-binding site is contributed by 288–290 (HIG).

This sequence belongs to the D-isomer specific 2-hydroxyacid dehydrogenase family. GyaR subfamily. As to quaternary structure, homodimer.

Its subcellular location is the cytoplasm. The catalysed reaction is glycolate + NAD(+) = glyoxylate + NADH + H(+). The chain is Glyoxylate reductase from Thermococcus kodakarensis (strain ATCC BAA-918 / JCM 12380 / KOD1) (Pyrococcus kodakaraensis (strain KOD1)).